The chain runs to 584 residues: 65 kDa membrane protein (584 aa).

The first 30 residues, 1 to 30 (MKFKSLITTTLALGVLASTGANFNNNEASA), serve as a signal peptide directing secretion. MAP repeat units follow at residues 45-154 (GYSK…EDKK), 156-265 (DKAN…ENKA), 266-374 (KRNY…KADR), 375-474 (YVPY…TGTK), and 475-584 (AKAD…KKNK).

It is found in the cell membrane. In terms of biological role, binds various plasma and ECM-proteins. The sequence is that of 65 kDa membrane protein from Staphylococcus aureus (strain Newman).